Here is a 336-residue protein sequence, read N- to C-terminus: Foldase protein PrsA (336 aa).

The N-terminal stretch at 1-22 is a signal peptide; it reads MKSAKKLLSVLCLGIFILTFTA. Residue Cys-23 is the site of N-palmitoyl cysteine attachment. Cys-23 carries S-diacylglycerol cysteine lipidation. Positions 194–286 constitute a PpiC domain; it reads PNTMNVSHIL…FGYHIIKINS (93 aa).

It belongs to the PrsA family.

It is found in the cell membrane. It catalyses the reaction [protein]-peptidylproline (omega=180) = [protein]-peptidylproline (omega=0). In terms of biological role, plays a major role in protein secretion by helping the post-translocational extracellular folding of several secreted proteins. The chain is Foldase protein PrsA from Clostridium botulinum (strain Kyoto / Type A2).